A 130-amino-acid chain; its full sequence is Small ribosomal subunit protein uS11c (130 aa).

It belongs to the universal ribosomal protein uS11 family. In terms of assembly, part of the 30S ribosomal subunit.

The protein resides in the plastid. It localises to the cyanelle. This Cyanophora paradoxa protein is Small ribosomal subunit protein uS11c.